Reading from the N-terminus, the 360-residue chain is DNA polymerase IV (360 aa).

A UmuC domain is found at 8-189 (IIHVDMDCFF…LPLEKIPGVG (182 aa)). Residues D12 and D107 each contribute to the Mg(2+) site. The active site involves E108.

This sequence belongs to the DNA polymerase type-Y family. In terms of assembly, monomer. The cofactor is Mg(2+).

It is found in the cytoplasm. It carries out the reaction DNA(n) + a 2'-deoxyribonucleoside 5'-triphosphate = DNA(n+1) + diphosphate. Functionally, poorly processive, error-prone DNA polymerase involved in untargeted mutagenesis. Copies undamaged DNA at stalled replication forks, which arise in vivo from mismatched or misaligned primer ends. These misaligned primers can be extended by PolIV. Exhibits no 3'-5' exonuclease (proofreading) activity. May be involved in translesional synthesis, in conjunction with the beta clamp from PolIII. The sequence is that of DNA polymerase IV from Vibrio cholerae serotype O1 (strain ATCC 39315 / El Tor Inaba N16961).